The following is a 235-amino-acid chain: Probable septum site-determining protein MinC (235 aa).

Positions 104 to 125 (KAVRPAPVEPATPSEPPQNANP) are disordered. Positions 110 to 119 (PVEPATPSEP) are enriched in pro residues.

Belongs to the MinC family. Interacts with MinD and FtsZ.

In terms of biological role, cell division inhibitor that blocks the formation of polar Z ring septums. Rapidly oscillates between the poles of the cell to destabilize FtsZ filaments that have formed before they mature into polar Z rings. Prevents FtsZ polymerization. The sequence is that of Probable septum site-determining protein MinC from Salmonella enteritidis PT4 (strain P125109).